The primary structure comprises 505 residues: Cyanidin 3-O-glucoside 7-O-glucosyltransferase (acyl-glucose) (505 aa).

An N-terminal signal peptide occupies residues 1-25 (MCPSFLVTLLLLQLSSLVVVLVVWA). Residues Q52, H152, and 197–198 (NE) each bind a beta-D-glucoside. The active-site Proton donor is the E198. C217 and C225 are joined by a disulfide. N-linked (GlcNAc...) asparagine glycans are attached at residues N224, N229, and N324. 2 residues coordinate a beta-D-glucoside: Y341 and E403. E403 (nucleophile) is an active-site residue. N-linked (GlcNAc...) asparagine glycans are attached at residues N411 and N437. 2 residues coordinate a beta-D-glucoside: W447 and Y463. N494 carries N-linked (GlcNAc...) asparagine glycosylation.

It belongs to the glycosyl hydrolase 1 family.

It localises to the vacuole. The catalysed reaction is 1-O-(4-hydroxy-3-methoxybenzoyl)-beta-D-glucose + cyanidin 3-O-beta-D-glucoside = cyanidin 3,7-di-O-beta-D-glucoside + vanillate. It functions in the pathway pigment biosynthesis; anthocyanin biosynthesis. In terms of biological role, beta-glycosidase that catalyzes the transfer of glucose moiety to anthocyanidin 3-glucoside at the 7 position. Anthocyanins are ubiquitous colored pigments that are responsible for variations in petal color. The chain is Cyanidin 3-O-glucoside 7-O-glucosyltransferase (acyl-glucose) (AA7GT) from Delphinium grandiflorum (Siberian larkspur).